A 314-amino-acid polypeptide reads, in one-letter code: Melanoma-associated antigen 12 (314 aa).

The span at 1 to 14 shows a compositional bias: basic and acidic residues; sequence MPLEQRSQHCKPEE. The interval 1–72 is disordered; the sequence is MPLEQRSQHC…HSPQGASTLP (72 aa). A compositionally biased stretch (low complexity) spans 17–44; sequence EAQGEALGLVGAQAPATEEQETASSSST. One can recognise an MAGE domain in the interval 109–308; it reads LSRKMAELVH…ISYPPLHEWA (200 aa).

In terms of tissue distribution, expressed in many tumors of several types, such as melanoma, head and neck squamous cell carcinoma, lung carcinoma and breast carcinoma, but not in normal tissues except for testes.

Its function is as follows. Not known, though may play a role tumor transformation or progression. In vitro promotes cell viability in melanoma cell lines. This Homo sapiens (Human) protein is Melanoma-associated antigen 12 (MAGEA12).